A 182-amino-acid chain; its full sequence is Malignant T-cell-amplified sequence 1 homolog (182 aa).

The PUA domain maps to 93–172 (VTMQQVDKGA…IGIETYHFLN (80 aa)).

Belongs to the MCTS1 family. In terms of assembly, interacts with DENR.

The protein resides in the cytoplasm. In terms of biological role, regulates translation as part of a complex with DENR. Specifically required for translational re-initiation in mRNAs containing upstream open reading frames (uORFs). Not required for standard translational initiation. Regulates expression of a subset of gene products including mbc, InR and EcR. This chain is Malignant T-cell-amplified sequence 1 homolog, found in Drosophila melanogaster (Fruit fly).